The following is a 305-amino-acid chain: Nucleotide-binding protein Rxyl_2009 (305 aa).

24–31 is an ATP binding site; sequence GLSGAGKS. A GTP-binding site is contributed by 75 to 78; that stretch reads DIRG.

Belongs to the RapZ-like family.

Displays ATPase and GTPase activities. The chain is Nucleotide-binding protein Rxyl_2009 from Rubrobacter xylanophilus (strain DSM 9941 / JCM 11954 / NBRC 16129 / PRD-1).